Consider the following 283-residue polypeptide: Thymidylate synthase (283 aa).

DUMP contacts are provided by residues arginine 31 and 145-146; that span reads RR. Catalysis depends on cysteine 165, which acts as the Nucleophile. Residues 185-188, asparagine 196, and 226-228 each bind dUMP; these read RSAD and HIY. (6R)-5,10-methylene-5,6,7,8-tetrahydrofolate is bound at residue aspartate 188. Serine 282 is a (6R)-5,10-methylene-5,6,7,8-tetrahydrofolate binding site.

This sequence belongs to the thymidylate synthase family. Bacterial-type ThyA subfamily. In terms of assembly, homodimer.

Its subcellular location is the cytoplasm. It carries out the reaction dUMP + (6R)-5,10-methylene-5,6,7,8-tetrahydrofolate = 7,8-dihydrofolate + dTMP. It functions in the pathway pyrimidine metabolism; dTTP biosynthesis. Its function is as follows. Catalyzes the reductive methylation of 2'-deoxyuridine-5'-monophosphate (dUMP) to 2'-deoxythymidine-5'-monophosphate (dTMP) while utilizing 5,10-methylenetetrahydrofolate (mTHF) as the methyl donor and reductant in the reaction, yielding dihydrofolate (DHF) as a by-product. This enzymatic reaction provides an intracellular de novo source of dTMP, an essential precursor for DNA biosynthesis. This Symbiobacterium thermophilum (strain DSM 24528 / JCM 14929 / IAM 14863 / T) protein is Thymidylate synthase.